A 156-amino-acid polypeptide reads, in one-letter code: Small ribosomal subunit protein uS7 (156 aa).

This sequence belongs to the universal ribosomal protein uS7 family. Part of the 30S ribosomal subunit. Contacts proteins S9 and S11.

Functionally, one of the primary rRNA binding proteins, it binds directly to 16S rRNA where it nucleates assembly of the head domain of the 30S subunit. Is located at the subunit interface close to the decoding center, probably blocks exit of the E-site tRNA. The protein is Small ribosomal subunit protein uS7 of Klebsiella pneumoniae (strain 342).